The primary structure comprises 144 residues: Large ribosomal subunit protein uL15 (144 aa).

The interval 1–57 is disordered; it reads MLLNTLSPAAGSKHAPKRLGRGVGSGLGKTGGRGHKGQKSRSGGKVRPGFEGGQMPL. The span at 21-31 shows a compositional bias: gly residues; that stretch reads RGVGSGLGKTG. Over residues 32–44 the composition is skewed to basic residues; it reads GRGHKGQKSRSGG.

It belongs to the universal ribosomal protein uL15 family. In terms of assembly, part of the 50S ribosomal subunit.

Its function is as follows. Binds to the 23S rRNA. The protein is Large ribosomal subunit protein uL15 of Vibrio cholerae serotype O1 (strain ATCC 39541 / Classical Ogawa 395 / O395).